The chain runs to 220 residues: Large ribosomal subunit protein uL3 (220 aa).

The protein belongs to the universal ribosomal protein uL3 family. Part of the 50S ribosomal subunit. Forms a cluster with proteins L14 and L19.

Its function is as follows. One of the primary rRNA binding proteins, it binds directly near the 3'-end of the 23S rRNA, where it nucleates assembly of the 50S subunit. The chain is Large ribosomal subunit protein uL3 from Staphylococcus carnosus (strain TM300).